Reading from the N-terminus, the 114-residue chain is Protein ORF3 (114 aa).

Hydrophobic regions lie at residues 6 to 22 (CALG…CLCC) and 33 to 53 (AVVG…GLIL). Residues 28–68 (VSRLAAVVGGAAAVPAVVSGVTGLILSPSQSPIFIQPTPSP) are interaction with host HPX. The segment at 48–72 (VTGLILSPSQSPIFIQPTPSPPMSP) is interaction with the capsid protein. S71 is subject to Phosphoserine; by host. The tract at residues 72–114 (PLRPGLDLVFANPPDHSAPLGVTRPSAPPLPHVVDLPQLGPRR) is homodimerization, and interaction with host AMBP/bikunin. A disordered region spans residues 91–114 (LGVTRPSAPPLPHVVDLPQLGPRR). The tract at residues 95–104 (RPSAPPLPHV) is interaction with host SRC, HCK, FYN, PIK3R3 and GRB2. The short motif at 96–99 (PSAP) is the PTAP/PSAP motif element.

Belongs to the hepevirus ORF3 protein family. Forms homooligomers. Interacts with host SRC, HCK, FYN, PIK3R3 and GRB2 (via SH3 domain); binding does not activate the kinases. Interacts with host AMBP/bikunin and AMBP/alpha-1-microglobulin peptides. Interacts with host HPX/hemopexin. Interacts (when phosphorylated) with capsid protein ORF2. Interacts with host TSG101; this interaction plays a role in viral release from the host cell. Interacts with host SIRPA; this interaction down-regulates the phosphorylation of host IRF3. In terms of processing, palmitoylated in the N-terminus.

It is found in the host endoplasmic reticulum membrane. The protein localises to the host cytoplasm. Its subcellular location is the host cytoskeleton. The protein resides in the virion. It localises to the host cell membrane. In terms of biological role, small multifunctional phosphoprotein involved in virion morphogenesis, egress and counteracting host innate immunity. Plays critical roles in the final steps of viral release by interacting with host TSG101, a member of the vacuolar protein-sorting pathway and using other cellular host proteins involved in vesicle formation pathway. Also acts as a viroporin and forms ion conductive pores allowing viral particle release. Impairs the generation of type I interferon by down-regulating host TLR3 and TLR7 as well as their downstream signaling pathways. Down-regulates the phosphorylation of host IRF3 via the interaction with host SIRP-alpha, thereby inhibiting IFN-I expression. Interacts with host microtubules. In Hepatitis E virus genotype 1 (isolate Human/Burma) (HEV-1), this protein is Protein ORF3.